Here is a 1441-residue protein sequence, read N- to C-terminus: Remodeling and spacing factor 1 (1441 aa).

The DDT domain occupies 17-84 (PGSCPNFAVV…MRKIGKSVTA (68 aa)). Residues K136 and K215 each participate in a glycyl lysine isopeptide (Lys-Gly) (interchain with G-Cter in SUMO2) cross-link. The segment covering 215 to 227 (KNSSQQDNSSRES) has biased composition (polar residues). The disordered stretch occupies residues 215–283 (KNSSQQDNSS…TTVKKEKEDE (69 aa)). Residue S227 is modified to Phosphoserine. Basic and acidic residues-rich tracts occupy residues 234–257 (ETKK…KSEE) and 274–283 (TTVKKEKEDE). Residues K236, K243, K248, K252, and K254 each participate in a glycyl lysine isopeptide (Lys-Gly) (interchain with G-Cter in SUMO2) cross-link. Residue K277 forms a Glycyl lysine isopeptide (Lys-Gly) (interchain with G-Cter in SUMO1); alternate linkage. Residue K277 forms a Glycyl lysine isopeptide (Lys-Gly) (interchain with G-Cter in SUMO2); alternate linkage. Glycyl lysine isopeptide (Lys-Gly) (interchain with G-Cter in SUMO2) cross-links involve residues K284, K288, K294, K305, K306, K309, K323, K327, K337, K342, K358, K373, K381, and K390. Residues 330–340 (RADPKDTKSSM) show a composition bias toward basic and acidic residues. Residues 330 to 385 (RADPKDTKSSMEKPVAQEPERIEFGGNIKSSHEITEKSTEETEKLKNDQQAKIPLK) form a disordered region. Over residues 359-378 (SSHEITEKSTEETEKLKNDQ) the composition is skewed to basic and acidic residues. A phosphoserine mark is found at S392 and S397. Glycyl lysine isopeptide (Lys-Gly) (interchain with G-Cter in SUMO2) cross-links involve residues K400, K405, K415, and K419. S429 is modified (phosphoserine). K439 participates in a covalent cross-link: Glycyl lysine isopeptide (Lys-Gly) (interchain with G-Cter in SUMO2). A Glycyl lysine isopeptide (Lys-Gly) (interchain with G-Cter in SUMO1); alternate cross-link involves residue K456. K456 is covalently cross-linked (Glycyl lysine isopeptide (Lys-Gly) (interchain with G-Cter in SUMO2); alternate). Residues K463 and K468 each participate in a glycyl lysine isopeptide (Lys-Gly) (interchain with G-Cter in SUMO2) cross-link. Positions 467 to 480 (TKEESYSPSKDRNI) are enriched in basic and acidic residues. The interval 467-634 (TKEESYSPSK…AAETSPPSNI (168 aa)) is disordered. Phosphoserine is present on S473. The span at 482-498 (TEGNGTESLNSVITSMK) shows a compositional bias: polar residues. K498 participates in a covalent cross-link: Glycyl lysine isopeptide (Lys-Gly) (interchain with G-Cter in SUMO2). A compositionally biased stretch (basic and acidic residues) spans 500 to 514 (GELEKETAPLRKDAD). Phosphoserine is present on S524. A compositionally biased stretch (polar residues) spans 552–562 (SKTALSSTESC). A Glycyl lysine isopeptide (Lys-Gly) (interchain with G-Cter in SUMO2) cross-link involves residue K565. Over residues 565–601 (KGEEKSPKTKKDKRPPILECLEKLEKSKKTFLDKDAQ) the composition is skewed to basic and acidic residues. 2 positions are modified to phosphoserine: S570 and S604. Over residues 609–621 (EVPKSTLESEKPG) the composition is skewed to basic and acidic residues. The residue at position 622 (S622) is a Phosphoserine. T628 carries the post-translational modification Phosphothreonine. A Phosphoserine modification is found at S629. Glycyl lysine isopeptide (Lys-Gly) (interchain with G-Cter in SUMO2) cross-links involve residues K662, K663, K670, K677, K698, and K709. Positions 675–887 (FTKVEMDNLD…EEKESEEAIL (213 aa)) are disordered. Phosphoserine is present on S748. Composition is skewed to basic and acidic residues over residues 753 to 770 (LEPE…EKTN), 789 to 802 (AEIR…KRGE), and 816 to 831 (KTDK…KDTN). Residues K758, K768, K795, and K799 each participate in a glycyl lysine isopeptide (Lys-Gly) (interchain with G-Cter in SUMO2) cross-link. Over residues 864–873 (GSGSEKSSAA) the composition is skewed to low complexity. Positions 874 to 887 (SEEEEEKESEEAIL) are enriched in acidic residues. A Phosphoserine modification is found at S882. The PHD-type zinc-finger motif lies at 891–941 (DEPCKKCGLPNHPELILLCDSCDSGYHTACLRPPLMIIPDGEWFCPPCQHK). The stretch at 942–1012 (LLCEKLEEQL…SKANLLERRS (71 aa)) forms a coiled coil. The disordered stretch occupies residues 983-1007 (PPQEPDFSEDQEEKKKDSKKSKANL). Residue K1039 forms a Glycyl lysine isopeptide (Lys-Gly) (interchain with G-Cter in SUMO2) linkage. K1050 is modified (N6-acetyllysine). The disordered stretch occupies residues 1063–1428 (ISTILDEERK…EEEEDELLRV (366 aa)). Acidic residues-rich tracts occupy residues 1094–1107 (LDSD…ESED) and 1120–1141 (VVSD…DSDT). Residues S1096, S1098, and S1105 each carry the phosphoserine modification. Residues 1146-1169 (RRLRRHPSRPMRQSRRLRRKTPKK) are compositionally biased toward basic residues. Residues 1189-1199 (SDFSDDFSDDF) show a composition bias toward acidic residues. The segment covering 1203 to 1212 (RRRRSRRNQK) has biased composition (basic residues). Residues S1221, S1223, and S1226 each carry the phosphoserine modification. Residues 1229-1244 (SLRRGKEIRRVHKRRL) show a composition bias toward basic residues. A phosphoserine mark is found at S1258 and S1277. T1278 carries the post-translational modification Phosphothreonine. Over residues 1280-1292 (EYSEADEEEEEEE) the composition is skewed to acidic residues. Residue T1305 is modified to Phosphothreonine. Residues S1325 and S1336 each carry the phosphoserine modification. The segment covering 1335–1344 (ESTKKPYRIE) has biased composition (basic and acidic residues). An N6-acetyllysine modification is found at K1339. Phosphoserine is present on residues S1345, S1359, and S1375. A compositionally biased stretch (polar residues) spans 1394–1408 (PKDNSTASASLASNG).

In terms of assembly, component of the RSF-1 ISWI chromatin-remodeling complex at least composed of SMARCA1 and RSF1. Within the RSF-1 ISWI chromatin-remodeling complex interacts with SMARCA1. Component of the RSF-5 ISWI chromatin-remodeling complex (also called the RSF complex) at least composed of SMARCA5/SNF2H and RSF1. Within the RSF-5 ISWI chromatin-remodeling complex interacts with SMARCA5/SNF2H; the interaction is direct. Identified in a centromere complex containing histones H2A, H2B and H4, and at least CENPA, CENPB, CENPC, CENPT, CENPN, HJURP, SUPT16H, SSRP1 and RSF1. Also binds the HBV pX/HBx protein, which is required to activate transcription of the viral genome. Post-translationally, phosphorylated. Ubiquitously expressed. Highly expressed in the heart, skeletal muscle, kidney and placenta. Expressed at low levels in the brain and colon.

Its subcellular location is the nucleus. Regulatory subunit of the ATP-dependent RSF-1 and RSF-5 ISWI chromatin-remodeling complexes, which form ordered nucleosome arrays on chromatin and facilitate access to DNA during DNA-templated processes such as DNA replication, transcription, and repair. Binds to core histones together with SMARCA5, and is required for the assembly of regular nucleosome arrays by the RSF-5 ISWI chromatin-remodeling complex. Directly stimulates the ATPase activity of SMARCA1 and SMARCA5 in the RSF-1 and RSF-5 ISWI chromatin-remodeling complexes, respectively. The RSF-1 ISWI chromatin remodeling complex has a lower ATP hydrolysis rate than the RSF-5 ISWI chromatin-remodeling complex. The complexes do not have the ability to slide mononucleosomes to the center of a DNA template. Facilitates transcription of hepatitis B virus (HBV) genes by the pX transcription activator. In case of infection by HBV, together with pX, it represses TNF-alpha induced NF-kappa-B transcription activation. Represses transcription when artificially recruited to chromatin by fusion to a heterogeneous DNA binding domain. This Homo sapiens (Human) protein is Remodeling and spacing factor 1 (RSF1).